Here is a 255-residue protein sequence, read N- to C-terminus: High-affinity branched-chain amino acid transport ATP-binding protein BraF (255 aa).

In terms of domain architecture, ABC transporter spans Leu-6–Glu-254. Position 38-45 (Gly-38–Thr-45) interacts with ATP.

Belongs to the ABC transporter superfamily.

The protein resides in the cell inner membrane. In terms of biological role, component of the high affinity leucine, isoleucine, valine, transport system (LIV-I), which is operative without Na(+) and is specific for alanine and threonine, in addition to branched-chain amino acids. This chain is High-affinity branched-chain amino acid transport ATP-binding protein BraF (braF), found in Pseudomonas aeruginosa (strain ATCC 15692 / DSM 22644 / CIP 104116 / JCM 14847 / LMG 12228 / 1C / PRS 101 / PAO1).